Reading from the N-terminus, the 464-residue chain is ATP synthase subunit beta (464 aa).

152-159 (GGAGVGKT) is an ATP binding site.

Belongs to the ATPase alpha/beta chains family. In terms of assembly, F-type ATPases have 2 components, CF(1) - the catalytic core - and CF(0) - the membrane proton channel. CF(1) has five subunits: alpha(3), beta(3), gamma(1), delta(1), epsilon(1). CF(0) has three main subunits: a(1), b(2) and c(9-12). The alpha and beta chains form an alternating ring which encloses part of the gamma chain. CF(1) is attached to CF(0) by a central stalk formed by the gamma and epsilon chains, while a peripheral stalk is formed by the delta and b chains.

It is found in the cell membrane. The enzyme catalyses ATP + H2O + 4 H(+)(in) = ADP + phosphate + 5 H(+)(out). In terms of biological role, produces ATP from ADP in the presence of a proton gradient across the membrane. The catalytic sites are hosted primarily by the beta subunits. The protein is ATP synthase subunit beta of Ureaplasma urealyticum serovar 10 (strain ATCC 33699 / Western).